The primary structure comprises 1198 residues: DNA polymerase (1198 aa).

3 disordered regions span residues 1-87, 179-199, and 904-930; these read MALV…PRGT, LEQPDGQGQAAEVEDHQPNPP, and QLALADSDAEESEDERAPTPFYSPPSG. Composition is skewed to low complexity over residues 30–40 and 57–68; these read QQPTRAAPAPA and APPTSGGSPASP.

It belongs to the DNA polymerase type-B family. In terms of assembly, heterodimer with the terminal protein; this heterodimer binds to bp 9 to 18 of the genome. Forms a complex with viral pTP, DBP and hosts NFIA and POU2F1/OCT1 for initiation of replication.

The protein resides in the host nucleus. The catalysed reaction is DNA(n) + a 2'-deoxyribonucleoside 5'-triphosphate = DNA(n+1) + diphosphate. In terms of biological role, eukaryotic-type DNA polymerase involved in viral genomic replication. DNA synthesis is protein primed, and acts in a strand displacement replication. Assembles in complex with viral pTP, DBP, host NFIA and host POU2F1/OCT1 on viral origin of replication. The polymerase covalently transfers dCMP onto pTP, thereby initiating complementary strand synthesis. In Homo sapiens (Human), this protein is DNA polymerase.